The chain runs to 251 residues: tRNA (guanine-N(1)-)-methyltransferase (251 aa).

S-adenosyl-L-methionine is bound by residues G114 and 134–139; that span reads IGDYVL.

It belongs to the RNA methyltransferase TrmD family. As to quaternary structure, homodimer.

The protein localises to the cytoplasm. The catalysed reaction is guanosine(37) in tRNA + S-adenosyl-L-methionine = N(1)-methylguanosine(37) in tRNA + S-adenosyl-L-homocysteine + H(+). Functionally, specifically methylates guanosine-37 in various tRNAs. The sequence is that of tRNA (guanine-N(1)-)-methyltransferase from Pelotomaculum thermopropionicum (strain DSM 13744 / JCM 10971 / SI).